Here is a 222-residue protein sequence, read N- to C-terminus: Methylthioribulose-1-phosphate dehydratase (222 aa).

Residues histidine 94 and histidine 96 each contribute to the Zn(2+) site.

Belongs to the aldolase class II family. MtnB subfamily. It depends on Zn(2+) as a cofactor.

It carries out the reaction 5-(methylsulfanyl)-D-ribulose 1-phosphate = 5-methylsulfanyl-2,3-dioxopentyl phosphate + H2O. Its pathway is amino-acid biosynthesis; L-methionine biosynthesis via salvage pathway; L-methionine from S-methyl-5-thio-alpha-D-ribose 1-phosphate: step 2/6. Functionally, catalyzes the dehydration of methylthioribulose-1-phosphate (MTRu-1-P) into 2,3-diketo-5-methylthiopentyl-1-phosphate (DK-MTP-1-P). The sequence is that of Methylthioribulose-1-phosphate dehydratase from Yersinia pseudotuberculosis serotype IB (strain PB1/+).